A 66-amino-acid chain; its full sequence is Large ribosomal subunit protein bL31 (66 aa).

Zn(2+)-binding residues include Cys-16, Cys-18, Cys-36, and Cys-39.

It belongs to the bacterial ribosomal protein bL31 family. Type A subfamily. In terms of assembly, part of the 50S ribosomal subunit. The cofactor is Zn(2+).

Its function is as follows. Binds the 23S rRNA. The chain is Large ribosomal subunit protein bL31 from Thermodesulfovibrio yellowstonii (strain ATCC 51303 / DSM 11347 / YP87).